A 327-amino-acid polypeptide reads, in one-letter code: Cell surface glycoprotein CD200 receptor 1 (327 aa).

Residues 1–23 (MLCFWRTSHVAVLLIWGVFAAES) form the signal peptide. At 24–239 (SCPDKNQTMQ…GRGGDQLLGS (216 aa)) the chain is on the extracellular side. In terms of domain architecture, Ig-like V-type spans 26-145 (PDKNQTMQNN…GNFQNIYDLQ (120 aa)). Residues Asn29, Asn34, Asn43, Asn96, Asn159, Asn187, Asn192, and Asn222 are each glycosylated (N-linked (GlcNAc...) asparagine). 2 disulfides stabilise this stretch: Cys58–Cys129 and Cys81–Cys97. Positions 147-226 (LVPPEVTHFP…HLTTGNQSLS (80 aa)) constitute an Ig-like C2-type domain. Cystine bridges form between Cys164–Cys213 and Cys183–Cys201. The helical transmembrane segment at 240–260 (YIQYIIPSIIILIIIGCICLL) threads the bilayer. Over 261–327 (KISGCRKCKL…DCLTLSAMGI (67 aa)) the chain is Cytoplasmic.

Belongs to the CD200R family. CD200 and CD200R1 interact via their respective N-terminal Ig-like domains. In terms of processing, phosphorylated on tyrosine residues. Post-translationally, highly N-glycosylated. As to expression, restricted to cells of the myeloid lineage.

Its subcellular location is the cell membrane. In terms of biological role, inhibitory receptor for the CD200/OX2 cell surface glycoprotein. Limits inflammation by inhibiting the expression of pro-inflammatory molecules including TNF-alpha, interferons, and inducible nitric oxide synthase (iNOS) in response to selected stimuli. In Rattus norvegicus (Rat), this protein is Cell surface glycoprotein CD200 receptor 1 (Cd200r1).